The sequence spans 668 residues: Fructose-1,6-bisphosphatase class 3 (668 aa).

This sequence belongs to the FBPase class 3 family. Requires Mn(2+) as cofactor.

The catalysed reaction is beta-D-fructose 1,6-bisphosphate + H2O = beta-D-fructose 6-phosphate + phosphate. It functions in the pathway carbohydrate biosynthesis; gluconeogenesis. The sequence is that of Fructose-1,6-bisphosphatase class 3 from Clostridium botulinum (strain Kyoto / Type A2).